Reading from the N-terminus, the 86-residue chain is DSEFPCPRKQQPAGNSECSYYCEMNGQWKLGKFQNGARCDYNAVKDGVCNEGLCYASGDSASNTQNQGGSRRQENEDQGDDEWDRK.

Intrachain disulfides connect Cys-6-Cys-22, Cys-18-Cys-49, and Cys-39-Cys-54. The tract at residues 58-86 (GDSASNTQNQGGSRRQENEDQGDDEWDRK) is disordered. Positions 59 to 70 (DSASNTQNQGGS) are enriched in polar residues. A compositionally biased stretch (acidic residues) spans 76–86 (EDQGDDEWDRK).

As to expression, salivary gland (at protein level).

It is found in the secreted. Inhibits lectin and classical pathways of complement system activation in the host with no significant effect on the alternative pathway. Inhibits host extrinsic blood coagulation pathway but not the intrinsic cascade. Binds to neutral and negatively charged membranes in vitro; binding is reduced upon pre-incubation with Ca(2+). The polypeptide is BaSO(4)-adsorbing protein 1 (Ornithodoros savignyi (African eyed tampan)).